Reading from the N-terminus, the 520-residue chain is CUGBP Elav-like family member 4 (520 aa).

RRM domains follow at residues 47-128 (IKLF…PADS), 135-215 (RKLF…FADT), and 435-513 (CNLF…LKRP).

The protein belongs to the CELF/BRUNOL family.

The protein localises to the nucleus. It localises to the cytoplasm. In terms of biological role, RNA-binding protein that may be implicated in the regulation of pre-mRNA alternative splicing. In Danio rerio (Zebrafish), this protein is CUGBP Elav-like family member 4 (celf4).